A 310-amino-acid polypeptide reads, in one-letter code: AT-hook motif nuclear-localized protein 15 (310 aa).

Disordered stretches follow at residues 15–112 (VESP…KESP) and 239–310 (EEEQ…PPSY). Polar residues-rich tracts occupy residues 31-41 (SNNNNPPTMTR) and 51-67 (TTNN…SQEE). The a.T hook DNA-binding region spans 88-100 (RRPRGRPPGSKNK). The segment covering 94 to 104 (PPGSKNKPKSP) has biased composition (low complexity). Residues 112–251 (PNSLQSHVLE…QQQEQPLQLE (140 aa)) form the PPC domain. A compositionally biased stretch (pro residues) spans 301–310 (GPPPRAPPSY).

Its subcellular location is the nucleus. Its function is as follows. Transcription factor that specifically binds AT-rich DNA sequences related to the nuclear matrix attachment regions (MARs). Binds the DNA sequence GNFEI (GA-negative feedback element I) in the GA3OX1 promoter. Negatively regulates plant innate immunity (PTI) to pathogens through the down-regulation of the PAMP-triggered FRK1 expression. This Arabidopsis thaliana (Mouse-ear cress) protein is AT-hook motif nuclear-localized protein 15.